A 505-amino-acid chain; its full sequence is Acetylcholine receptor subunit beta (505 aa).

The signal sequence occupies residues 1-24 (MTPGALLLLLLGVLGAHLAPGARG). Over 25–245 (SEAEGRLREK…VTFYLIIRRK (221 aa)) the chain is Extracellular. Residues Cys152 and Cys166 are joined by a disulfide bond. An N-linked (GlcNAc...) asparagine glycan is attached at Asn165. 3 consecutive transmembrane segments (helical) span residues 246 to 270 (PLFY…VFYL), 278 to 295 (MGLS…LLLL), and 312 to 333 (YLMF…VLNL). At 334-473 (HHRSPHTHQM…WQFVAMVVDR (140 aa)) the chain is on the cytoplasmic side. Residues 365–391 (KPERDQMQEPPSIAPRDSPGSGWGRGT) are disordered. Tyr394 carries the phosphotyrosine; by Tyr-kinases modification. Residues 474–492 (LFLWTFIIFTSVGTLVIFL) form a helical membrane-spanning segment.

It belongs to the ligand-gated ion channel (TC 1.A.9) family. Acetylcholine receptor (TC 1.A.9.1) subfamily. Beta-1/CHRNB1 sub-subfamily. As to quaternary structure, pentamer of two alpha chains, and one each of the beta, delta, and gamma (in immature muscle) or epsilon (in mature muscle) chains. The muscle heteropentamer composed of alpha-1, beta-1, delta, epsilon subunits interacts with the alpha-conotoxin ImII.

Its subcellular location is the postsynaptic cell membrane. It is found in the cell membrane. It carries out the reaction K(+)(in) = K(+)(out). The enzyme catalyses Na(+)(in) = Na(+)(out). Its function is as follows. After binding acetylcholine, the AChR responds by an extensive change in conformation that affects all subunits and leads to opening of an ion-conducting channel across the plasma membrane. In Bos taurus (Bovine), this protein is Acetylcholine receptor subunit beta (CHRNB1).